The chain runs to 615 residues: Granule-bound starch synthase 1, chloroplastic/amyloplastic (615 aa).

A chloroplast-targeting transit peptide spans 1 to 70 (MAALVTSQLA…DRRCLSMVVR (70 aa)). K91 is an ADP-alpha-D-glucose binding site.

It belongs to the glycosyltransferase 1 family. Bacterial/plant glycogen synthase subfamily. As to expression, found in seeds and pollen.

It is found in the plastid. Its subcellular location is the chloroplast. It localises to the amyloplast. The enzyme catalyses an NDP-alpha-D-glucose + [(1-&gt;4)-alpha-D-glucosyl](n) = [(1-&gt;4)-alpha-D-glucosyl](n+1) + a ribonucleoside 5'-diphosphate + H(+). Its pathway is glycan biosynthesis; starch biosynthesis. The protein is Granule-bound starch synthase 1, chloroplastic/amyloplastic (WAXY) of Triticum aestivum (Wheat).